Here is a 655-residue protein sequence, read N- to C-terminus: Forkhead box protein O1 (655 aa).

Disordered stretches follow at residues 1 to 63 (MAEA…SASA) and 116 to 158 (GCLH…SRRN). The residue at position 24 (threonine 24) is a Phosphothreonine; by PKB/AKT1 or PKB/AKT2 and SGK1. Over residues 33–63 (SQSNSATSSPAPSGSAAANPDAAAGLPSASA) the composition is skewed to low complexity. The span at 120 to 141 (PAPPQPPPPGPLSQHPPVPPAA) shows a compositional bias: pro residues. The segment at residues 159–235 (AWGNLSYADL…VQNEGTGKSS (77 aa)) is a DNA-binding region (fork-head). 2 DNA-binding regions span residues 211 to 218 (NSIRHNLS) and 234 to 237 (SSWW). Serine 212, serine 218, serine 234, and serine 235 each carry phosphoserine; by STK4/MST1. Residues 234-344 (SSWWMLNPEG…QDDLGEGDVH (111 aa)) form a disordered region. 2 positions are modified to N6-acetyllysine: lysine 245 and lysine 248. Serine 249 carries the post-translational modification Phosphoserine; by CDK1. 2 positions are modified to omega-N-methylarginine; by PRMT1: arginine 251 and arginine 253. Residues 251–253 (RRR) carry the Nuclear localization signal motif. Phosphoserine; by PKB/AKT1 and SGK1 is present on serine 256. An N6-acetyllysine mark is found at lysine 262, lysine 265, and lysine 274. The span at 264–275 (AKSRSRAAKKKA) shows a compositional bias: basic residues. Residues 283–563 (GAGDSPGSQF…RLTQVKTPVQ (281 aa)) are sufficient for interaction with NLK. Phosphoserine is present on residues serine 287 and serine 298. Residues 309–326 (NWSTFRPRTSSNASTISG) show a composition bias toward polar residues. At serine 319 the chain carries Phosphoserine; by PKB/AKT1. Serine 322 is subject to Phosphoserine; by CK1 and SGK1. Serine 325 is subject to Phosphoserine; by CK1. Serine 329 carries the phosphoserine; by DYRK1A modification. Threonine 333 carries the phosphothreonine modification. Positions 363–459 (SEISNPENME…GGMSQYNCAP (97 aa)) are required for interaction with RUNX2. The residue at position 423 (lysine 423) is an N6-acetyllysine. The short motif at 462 to 466 (LKELL) is the Required for interaction with SIRT1 element. The segment covering 507–534 (YGSQASHNKMMNPSSHTHPGHAQQTSAV) has biased composition (polar residues). Residues 507–537 (YGSQASHNKMMNPSSHTHPGHAQQTSAVNGR) are disordered.

In terms of assembly, interacts with LRPPRC. Interacts with RUNX2; the interaction inhibits RUNX2 transcriptional activity and mediates the IGF1/insulin-dependent BGLAP expression in osteoblasts Interacts with PPP2R1A; the interaction regulates the dephosphorylation of FOXO1 at Thr-24 and Ser-256 leading to its nuclear import. Interacts (acetylated form) with PPARG. Interacts with XBP1 isoform 2; this interaction is direct and leads to FOXO1 ubiquitination and degradation via the proteasome pathway. Interacts with NLK. Interacts with SIRT1; the interaction results in the deacetylation of FOXO1 leading to activation of FOXO1-mediated transcription of genes involved in DNA repair and stress resistance. Binds to CDK1. Interacts with the 14-3-3 proteins, YWHAG and YWHAZ; the interactions require insulin-stimulated phosphorylation on Thr-24, promote nuclear exit and loss of transcriptional activity. Interacts with SKP2; the interaction ubiquitinates FOXO1 leading to its proteasomal degradation. The interaction requires the presence of KRIT1. Interacts (via the C-terminal half) with ATF4 (via its DNA-binding domain); the interaction occurs in osteoblasts, regulates glucose homeostasis via suppression of beta-cell proliferation and subsequent decrease in insulin production. Interacts with PRMT1; the interaction methylates FOXO1, prevents PKB/AKT1 phosphorylation and retains FOXO1 in the nucleus. Interacts with EP300 and CREBBP; the interactions acetylate FOXO1. Interacts with SIRT2; the interaction is disrupted in response to oxidative stress or serum deprivation, leading to increased level of acetylated FOXO1, which promotes stress-induced autophagy by stimulating E1-like activating enzyme ATG7. Interacts (acetylated form) with ATG7; the interaction is increased in response to oxidative stress or serum deprivation and promotes the autophagic process leading to cell death. Interacts (via the Fork-head domain) with CEBPA; the interaction increases when FOXO1 is deacetylated. Interacts with WDFY2. Forms a complex with WDFY2 and AKT1. Interacts with CRY1. Interacts with PPIA/CYPA; the interaction promotes FOXO1 dephosphorylation, nuclear accumulation and transcriptional activity. Interacts with TOX4; FOXO1 is required for full induction of TOX4-dependent activity and the interaction is inhibited by insulin. Interacts (when phosphorylated on Ser-256) with STUB1/CHIP. Post-translationally, phosphorylation by NLK promotes nuclear export and inhibits the transcriptional activity. In response to growth factors, phosphorylation on Thr-24, Ser-256 and Ser-322 by PKB/AKT1 promotes nuclear export and inactivation of transactivational activity. Phosphorylation on Thr-24 is required for binding 14-3-3 proteins. Phosphorylation of Ser-256 decreases DNA-binding activity and promotes the phosphorylation of Thr-24 and Ser-319, permitting phosphorylation of Ser-322 and Ser-325, probably by CDK1, leading to nuclear exclusion and loss of function. Stress signals, such as response to oxygen or nitric oxide, attenuate the PKB/AKT1-mediated phosphorylation leading to nuclear retention. Phosphorylation of Ser-329 is independent of IGF1 and leads to reduced function. Dephosphorylated on Thr-24 and Ser-256 by PP2A in beta-cells under oxidative stress leading to nuclear retention. Phosphorylation of Ser-249 by CDK1 disrupts binding of 14-3-3 proteins leading to nuclear accumulation and has no effect on DNA-binding nor transcriptional activity. Phosphorylation by STK4/MST1 on Ser-212, upon oxidative stress, inhibits binding to 14-3-3 proteins and nuclear export. PPIA/CYPA promotes its dephosphorylation on Ser-256. In terms of processing, ubiquitinated by SKP2. Ubiquitination leads to proteasomal degradation. Ubiquitinated by STUB1/CHIP; when Ser-256 is phosphorylated. Methylation inhibits AKT1-mediated phosphorylation at Ser-256 and is increased by oxidative stress. Post-translationally, acetylated. Acetylation at Lys-262, Lys-265 and Lys-274 are necessary for autophagic cell death induction. Deacetylated by SIRT2 in response to oxidative stress or serum deprivation, thereby negatively regulating FOXO1-mediated autophagic cell death. Once in the nucleus, acetylated by CREBBP/EP300. Acetylation diminishes the interaction with target DNA and attenuates the transcriptional activity. It increases the phosphorylation at Ser-256. Deacetylation by SIRT1 results in reactivation of the transcriptional activity. Oxidative stress by hydrogen peroxide treatment appears to promote deacetylation and uncoupling of insulin-induced phosphorylation. By contrast, resveratrol acts independently of acetylation. Acetylated at Lys-423, promoting its localization to the nucleus and transcription factor activity. Deacetylation at Lys-423 by SIRT6, promotes its translocation into the cytoplasm, preventing its transcription factor activity. Deacetylation and subsequent inhibition by SIRT6 has different effects depending on cell types: it inhibits gluconeogenesis in hepatocytes, promotes glucose sensing in pancreatic beta-cells and regulates lipid catabolism in brown adipocytes. In terms of tissue distribution, expressed in umbilical endothelial cells (at protein level). Abundantly expressed in skeletal muscle and ovary, with lower expression in the heart, placenta, lung, liver, pancreas, spleen, testis and small intestine. Weakly expressed in the brain, thymus, prostate and mucosal lining of the colon.

The protein localises to the cytoplasm. The protein resides in the nucleus. Transcription factor that is the main target of insulin signaling and regulates metabolic homeostasis in response to oxidative stress. Binds to the insulin response element (IRE) with consensus sequence 5'-TT[G/A]TTTTG-3' and the related Daf-16 family binding element (DBE) with consensus sequence 5'-TT[G/A]TTTAC-3'. Activity suppressed by insulin. Main regulator of redox balance and osteoblast numbers and controls bone mass. Orchestrates the endocrine function of the skeleton in regulating glucose metabolism. Also acts as a key regulator of chondrogenic commitment of skeletal progenitor cells in response to lipid availability: when lipids levels are low, translocates to the nucleus and promotes expression of SOX9, which induces chondrogenic commitment and suppresses fatty acid oxidation. Acts synergistically with ATF4 to suppress osteocalcin/BGLAP activity, increasing glucose levels and triggering glucose intolerance and insulin insensitivity. Also suppresses the transcriptional activity of RUNX2, an upstream activator of osteocalcin/BGLAP. Acts as an inhibitor of glucose sensing in pancreatic beta cells by acting as a transcription repressor and suppressing expression of PDX1. In hepatocytes, promotes gluconeogenesis by acting together with PPARGC1A and CEBPA to activate the expression of genes such as IGFBP1, G6PC1 and PCK1. Also promotes gluconeogenesis by directly promoting expression of PPARGC1A and G6PC1. Important regulator of cell death acting downstream of CDK1, PKB/AKT1 and STK4/MST1. Promotes neural cell death. Mediates insulin action on adipose tissue. Regulates the expression of adipogenic genes such as PPARG during preadipocyte differentiation and, adipocyte size and adipose tissue-specific gene expression in response to excessive calorie intake. Regulates the transcriptional activity of GADD45A and repair of nitric oxide-damaged DNA in beta-cells. Required for the autophagic cell death induction in response to starvation or oxidative stress in a transcription-independent manner. Mediates the function of MLIP in cardiomyocytes hypertrophy and cardiac remodeling. Positive regulator of apoptosis in cardiac smooth muscle cells as a result of its transcriptional activation of pro-apoptotic genes. Regulates endothelial cell (EC) viability and apoptosis in a PPIA/CYPA-dependent manner via transcription of CCL2 and BCL2L11 which are involved in EC chemotaxis and apoptosis. In Homo sapiens (Human), this protein is Forkhead box protein O1.